Reading from the N-terminus, the 427-residue chain is Imidazolonepropionase (427 aa).

Fe(3+) is bound by residues histidine 96 and histidine 98. Zn(2+) is bound by residues histidine 96 and histidine 98. Positions 105, 168, and 201 each coordinate 4-imidazolone-5-propanoate. Position 168 (tyrosine 168) interacts with N-formimidoyl-L-glutamate. Residue histidine 265 participates in Fe(3+) binding. Position 265 (histidine 265) interacts with Zn(2+). Residue glutamine 268 participates in 4-imidazolone-5-propanoate binding. Aspartate 340 is a Fe(3+) binding site. Aspartate 340 is a Zn(2+) binding site. Positions 342 and 344 each coordinate N-formimidoyl-L-glutamate. Threonine 345 contributes to the 4-imidazolone-5-propanoate binding site.

This sequence belongs to the metallo-dependent hydrolases superfamily. HutI family. Requires Zn(2+) as cofactor. The cofactor is Fe(3+).

It is found in the cytoplasm. It catalyses the reaction 4-imidazolone-5-propanoate + H2O = N-formimidoyl-L-glutamate. It participates in amino-acid degradation; L-histidine degradation into L-glutamate; N-formimidoyl-L-glutamate from L-histidine: step 3/3. Functionally, catalyzes the hydrolytic cleavage of the carbon-nitrogen bond in imidazolone-5-propanoate to yield N-formimidoyl-L-glutamate. It is the third step in the universal histidine degradation pathway. The chain is Imidazolonepropionase from Psychrobacter cryohalolentis (strain ATCC BAA-1226 / DSM 17306 / VKM B-2378 / K5).